Consider the following 165-residue polypeptide: IQSTSMDQGSLSEDSMNSFIRTLIQAGIWKNKVPRQMTRTQDGIQTIVKKTEDEPDATASKDISLGFQPIVSMDAELLRQQRRFSSPRVLLSENTPLEPPPLYLMEEPMVLNRTSRRKRFAEGKSHRGEYSVCDSESRWVTDKSSAVDIRGHQVTVLGEIRMGPS.

The N-terminal stretch at 1–3 is a signal peptide; that stretch reads IQS. Positions 4–119 are excised as a propeptide; it reads TSMDQGSLSE…VLNRTSRRKR (116 aa). Asn-112 carries an N-linked (GlcNAc...) asparagine glycan.

The protein belongs to the NGF-beta family.

It localises to the secreted. Its function is as follows. Seems to promote the survival of visceral and proprioceptive sensory neurons. This Anilius scytale (Coral cylinder snake) protein is Neurotrophin-3 (NTF3).